A 465-amino-acid chain; its full sequence is Cysteine--tRNA ligase (465 aa).

Cys27 serves as a coordination point for Zn(2+). Residues 29-39 (PTVYNFFHIGN) carry the 'HIGH' region motif. Cys207, His232, and Glu236 together coordinate Zn(2+). Residues 264 to 268 (KMSKS) carry the 'KMSKS' region motif. Lys267 contacts ATP.

It belongs to the class-I aminoacyl-tRNA synthetase family. As to quaternary structure, monomer. Requires Zn(2+) as cofactor.

The protein resides in the cytoplasm. The catalysed reaction is tRNA(Cys) + L-cysteine + ATP = L-cysteinyl-tRNA(Cys) + AMP + diphosphate. The sequence is that of Cysteine--tRNA ligase from Clostridium kluyveri (strain NBRC 12016).